Here is a 463-residue protein sequence, read N- to C-terminus: ATP synthase subunit beta (463 aa).

Glycine 152–threonine 159 lines the ATP pocket.

It belongs to the ATPase alpha/beta chains family. As to quaternary structure, F-type ATPases have 2 components, CF(1) - the catalytic core - and CF(0) - the membrane proton channel. CF(1) has five subunits: alpha(3), beta(3), gamma(1), delta(1), epsilon(1). CF(0) has three main subunits: a(1), b(2) and c(9-12). The alpha and beta chains form an alternating ring which encloses part of the gamma chain. CF(1) is attached to CF(0) by a central stalk formed by the gamma and epsilon chains, while a peripheral stalk is formed by the delta and b chains.

The protein localises to the cell membrane. It catalyses the reaction ATP + H2O + 4 H(+)(in) = ADP + phosphate + 5 H(+)(out). Functionally, produces ATP from ADP in the presence of a proton gradient across the membrane. The catalytic sites are hosted primarily by the beta subunits. The chain is ATP synthase subunit beta from Clostridium botulinum (strain Alaska E43 / Type E3).